Reading from the N-terminus, the 578-residue chain is Probable acyl-activating enzyme 12, peroxisomal (578 aa).

The Microbody targeting signal signature appears at 576 to 578 (SRL).

It belongs to the ATP-dependent AMP-binding enzyme family. In terms of tissue distribution, expressed at low levels in leaves.

The protein localises to the peroxisome. Functionally, may act as an acid--thiol ligase that activates carboxylic acids by forming acyl-CoAs. This is Probable acyl-activating enzyme 12, peroxisomal (AAE12) from Arabidopsis thaliana (Mouse-ear cress).